Reading from the N-terminus, the 166-residue chain is Ribosome maturation factor RimP (166 aa).

Belongs to the RimP family.

It localises to the cytoplasm. Required for maturation of 30S ribosomal subunits. This Psychrobacter cryohalolentis (strain ATCC BAA-1226 / DSM 17306 / VKM B-2378 / K5) protein is Ribosome maturation factor RimP.